Reading from the N-terminus, the 580-residue chain is Efflux pump dotC (580 aa).

The segment covering 1 to 34 has biased composition (basic and acidic residues); that stretch reads MSEDHTKADNLSEKDPHSPERSDSSSHEDAHARE. A disordered region spans residues 1 to 45; that stretch reads MSEDHTKADNLSEKDPHSPERSDSSSHEDAHAREEEESSDDDGAL. N10 is a glycosylation site (N-linked (GlcNAc...) asparagine). Residues 35 to 44 are compositionally biased toward acidic residues; the sequence is EEESSDDDGA. The chain crosses the membrane as a helical span at residues 49 to 69; it reads PASLIAIVMIALSLAVFLSAL. N-linked (GlcNAc...) asparagine glycosylation is present at N86. Transmembrane regions (helical) follow at residues 89-109, 127-147, 153-173, 181-201, 209-229, 242-262, 275-295, 318-338, 348-368, 380-400, 409-429, 444-466, and 519-539; these read AAYTWVGSAYLLANAASTPIW, ALFMIGSLVCALSINVGMLIT, GAAGGGLLTLVDTIIGDLFSL, GMIGGVWAIACALGPIVGGAF, WCFYINLPIDGLAFGIIFFFL, FAAIDWAGSFFIIGGTLMFLF, SATVICLLVFGVVCIVLFGLV, ALLVAFFHSFVFISAFYYLPL, PILAGVYILPAVLSTGVSAAA, LIPMYFGMSMMILGYGLLINF, LIIYQLIAGIGNGPNFQAPLV, TATFNFVRNIATAISVVAGQVLY, and SPMWIMYTAFAAAGLFCILLV. The segment at 559 to 580 is disordered; the sequence is KKAEAERKAERQAKDLEKAQKS.

It belongs to the major facilitator superfamily. TCR/Tet family.

Its subcellular location is the cell membrane. It is found in the vacuole membrane. Functionally, efflux pump; part of the gene cluster that mediates the biosynthesis of dothistromin (DOTH), a polyketide toxin very similar in structure to the aflatoxin precursor, versicolorin B. One function of dotC may be to transport early-stage dothistromin biosynthetic intermediates from the cytoplasm into vacuoles, thereby affecting the rate of dothistromin production. The protein is Efflux pump dotC of Dothistroma septosporum (strain NZE10 / CBS 128990) (Red band needle blight fungus).